The sequence spans 176 residues: MSSGHFFQWHLCDVFKSAMCCVSCTHTLSLLLCVLTLTSAATGAGPETLCGAELVDTLQFVCGERGFYFSKPTGYGPSSRRSHNRGIVDECCFQSCELRRLEMYCAPVKSGKAARSVRAQRHTDMPRTPKVSTAVQSVDRGTERRTAQHPDKTKPKKEVHQKNSSRGNTGGRNYRM.

Residues 45–73 (GPETLCGAELVDTLQFVCGERGFYFSKPT) are b. 3 disulfide bridges follow: Cys-50/Cys-92, Cys-62/Cys-105, and Cys-91/Cys-96. Residues 74-85 (GYGPSSRRSHNR) form a c region. The a stretch occupies residues 86–106 (GIVDECCFQSCELRRLEMYCA). Positions 107–114 (PVKSGKAA) are d. Residues 115 to 176 (RSVRAQRHTD…GNTGGRNYRM (62 aa)) constitute a propeptide, e peptide. The interval 115–176 (RSVRAQRHTD…GNTGGRNYRM (62 aa)) is disordered. The span at 140-161 (RGTERRTAQHPDKTKPKKEVHQ) shows a compositional bias: basic and acidic residues.

Belongs to the insulin family.

The protein resides in the secreted. Functionally, the insulin-like growth factors, isolated from plasma, are structurally and functionally related to insulin but have a much higher growth-promoting activity. Acts as a ligand for IGF1R. Binds to the alpha subunit of IGF1R, leading to the activation of the intrinsic tyrosine kinase activity which autophosphorylates tyrosine residues in the beta subunit thus initiatiating a cascade of down-stream signaling events leading to activation of the PI3K-AKT/PKB and the Ras-MAPK pathways. Binds to integrins. Its binding to integrins and subsequent ternary complex formation with integrins and IGFR1 are essential for IGF1 signaling. In Oncorhynchus mykiss (Rainbow trout), this protein is Insulin-like growth factor 1.